Here is a 243-residue protein sequence, read N- to C-terminus: Sugar fermentation stimulation protein homolog (243 aa).

This sequence belongs to the SfsA family.

This is Sugar fermentation stimulation protein homolog from Acaryochloris marina (strain MBIC 11017).